The primary structure comprises 317 residues: Zinc metalloproteinase/disintegrin (317 aa).

Residues glutamate 1 to leucine 26 constitute a propeptide that is removed on maturation. The Peptidase M12B domain maps to arginine 32–proline 228. Ca(2+) contacts are provided by glutamate 35 and aspartate 119. 3 disulfide bridges follow: cysteine 143-cysteine 223, cysteine 183-cysteine 207, and cysteine 185-cysteine 190. Residue histidine 168 participates in Zn(2+) binding. Glutamate 169 is an active-site residue. The Zn(2+) site is built by histidine 172 and histidine 178. Residues cysteine 223 and asparagine 226 each coordinate Ca(2+). Residues leucine 229–leucine 244 constitute a propeptide that is removed on maturation. The region spanning threonine 236–alanine 317 is the Disintegrin domain. Intrachain disulfides connect cysteine 250–cysteine 259, cysteine 252–cysteine 260, cysteine 265–cysteine 279, cysteine 273–cysteine 303, cysteine 278–cysteine 282, and cysteine 291–cysteine 310. The short motif at arginine 295–aspartate 297 is the Cell attachment site element.

It belongs to the venom metalloproteinase (M12B) family. P-II subfamily. P-IIa sub-subfamily. As to quaternary structure, monomer. Zn(2+) serves as cofactor. In terms of tissue distribution, expressed by the venom gland.

It localises to the secreted. Functionally, metalloproteinase that impairs hemostasis in the envenomed animal. In terms of biological role, inhibits GPIIb/GPIIIa (ITGA2B/ITGB3) binding to immobilized fibrinogen with an IC(50) of 2.2 nM and ADP-induced platelet aggregation with an IC(50) of 131 nM, respectively. Inhibits angiogenesis. By binding to vitronectin receptor (alpha-V/beta-3 (ITGAV/ITGB3)), also induces apoptosis of endothelial cells by blocking their attachment to extracellular matrix proteins. Inhibits platelet aggregation induced by ADP (IC(50) is 30 nM), collagen (IC(50) is 500 nM), thrombin and epinephrin (IC(50) is 160 nM). This chain is Zinc metalloproteinase/disintegrin, found in Gloydius brevicauda (Korean slamosa snake).